A 202-amino-acid polypeptide reads, in one-letter code: Small ribosomal subunit protein uS2 (202 aa).

This sequence belongs to the universal ribosomal protein uS2 family.

This is Small ribosomal subunit protein uS2 from Methanocorpusculum labreanum (strain ATCC 43576 / DSM 4855 / Z).